A 509-amino-acid chain; its full sequence is ATP synthase subunit alpha (509 aa).

Gly169 to Thr176 contributes to the ATP binding site.

Belongs to the ATPase alpha/beta chains family. As to quaternary structure, F-type ATPases have 2 components, CF(1) - the catalytic core - and CF(0) - the membrane proton channel. CF(1) has five subunits: alpha(3), beta(3), gamma(1), delta(1), epsilon(1). CF(0) has three main subunits: a(1), b(2) and c(9-12). The alpha and beta chains form an alternating ring which encloses part of the gamma chain. CF(1) is attached to CF(0) by a central stalk formed by the gamma and epsilon chains, while a peripheral stalk is formed by the delta and b chains.

It localises to the cell inner membrane. It catalyses the reaction ATP + H2O + 4 H(+)(in) = ADP + phosphate + 5 H(+)(out). Its function is as follows. Produces ATP from ADP in the presence of a proton gradient across the membrane. The alpha chain is a regulatory subunit. The protein is ATP synthase subunit alpha of Bradyrhizobium diazoefficiens (strain JCM 10833 / BCRC 13528 / IAM 13628 / NBRC 14792 / USDA 110).